We begin with the raw amino-acid sequence, 65 residues long: Large ribosomal subunit protein bL35 (65 aa).

The segment at 1–23 is disordered; it reads MPKMKSNRGAAKRFKRTGSGKFK. Basic residues predominate over residues 10–23; the sequence is AAKRFKRTGSGKFK.

Belongs to the bacterial ribosomal protein bL35 family.

This is Large ribosomal subunit protein bL35 from Acidithiobacillus ferrooxidans (strain ATCC 53993 / BNL-5-31) (Leptospirillum ferrooxidans (ATCC 53993)).